The following is a 235-amino-acid chain: Probable septum site-determining protein MinC (235 aa).

Residues 104–125 (KAVRPAPVEPATPSEPPQNANP) form a disordered region. Over residues 110 to 119 (PVEPATPSEP) the composition is skewed to pro residues.

The protein belongs to the MinC family. As to quaternary structure, interacts with MinD and FtsZ.

Cell division inhibitor that blocks the formation of polar Z ring septums. Rapidly oscillates between the poles of the cell to destabilize FtsZ filaments that have formed before they mature into polar Z rings. Prevents FtsZ polymerization. This chain is Probable septum site-determining protein MinC, found in Salmonella enteritidis PT4 (strain P125109).